A 509-amino-acid chain; its full sequence is GMP synthase [glutamine-hydrolyzing] (509 aa).

Positions 4-194 (KVIVLDFGGQ…LYEICGLTPD (191 aa)) constitute a Glutamine amidotransferase type-1 domain. Residue C81 is the Nucleophile of the active site. Residues H168 and E170 contribute to the active site. Residues 195–384 (WTMESFAQKA…LGLPESIVWR (190 aa)) enclose the GMPS ATP-PPase domain. Residue 222-228 (SGGVDSS) participates in ATP binding.

In terms of assembly, homodimer.

It catalyses the reaction XMP + L-glutamine + ATP + H2O = GMP + L-glutamate + AMP + diphosphate + 2 H(+). It functions in the pathway purine metabolism; GMP biosynthesis; GMP from XMP (L-Gln route): step 1/1. In terms of biological role, catalyzes the synthesis of GMP from XMP. The protein is GMP synthase [glutamine-hydrolyzing] of Carboxydothermus hydrogenoformans (strain ATCC BAA-161 / DSM 6008 / Z-2901).